We begin with the raw amino-acid sequence, 872 residues long: Armadillo repeat-containing protein 3 (872 aa).

12 ARM repeats span residues 15–54, 57–96, 98–138, 140–179, 181–220, 222–262, 264–304, 306–345, 346–385, 388–427, 429–468, and 470–509; these read DVFD…KFAL, EENK…ILAS, NDVK…NMSA, YTSK…NLVQ, FQCR…VIAN, KESR…NCLE, MDTM…KAAY, PENR…AMCE, NSGS…NLTT, PANA…NMAM, EPLR…ATAC, and VEAR…VCAG. S-palmitoyl cysteine attachment occurs at residues Cys507 and Cys518. A disordered region spans residues 610–693; sequence VSPPSSMEDK…SKGKKEEEKV (84 aa). The segment covering 626–635 has biased composition (low complexity); the sequence is RSISSSSSLR. Residues 636 to 646 are compositionally biased toward basic residues; it reads RSSKEKNKKNS. Over residues 675 to 693 the composition is skewed to basic and acidic residues; sequence ATKEKGWRKSKGKKEEEKV.

In terms of assembly, homodimer. Interacts with PIK3C3, PIK3R4 and BECN1. Interacts (via ARM domains) with ATG14. In terms of processing, palmitoylation is important for its function in autophagy. As to expression, expressed in skeletal muscle, brain, lung, kidney, prostate and testis. In terms of tissue distribution, mainly expressed in skeletal muscle, liver, spleen and thymus. Expressed only in the testis among normal tissues but is expressed frequently in various cancer tissues and, particularly, in pancreatic, lung and endometrial cancers.

Essential for male fertility and sperm motility. During spermatogenesis, promotes the autophagic degradation of excessive ribosomes, providing energy resources for mitochondria and thus ensuring sperm flagellar motility. This is Armadillo repeat-containing protein 3 (ARMC3) from Homo sapiens (Human).